The sequence spans 148 residues: ATP synthase epsilon chain (148 aa).

This sequence belongs to the ATPase epsilon chain family. As to quaternary structure, F-type ATPases have 2 components, CF(1) - the catalytic core - and CF(0) - the membrane proton channel. CF(1) has five subunits: alpha(3), beta(3), gamma(1), delta(1), epsilon(1). CF(0) has three main subunits: a, b and c.

The protein localises to the cell membrane. Functionally, produces ATP from ADP in the presence of a proton gradient across the membrane. This Streptococcus thermophilus (strain ATCC BAA-250 / LMG 18311) protein is ATP synthase epsilon chain.